The chain runs to 201 residues: Prostamide/prostaglandin F synthase (201 aa).

A Phosphotyrosine modification is found at Tyr-108.

Belongs to the peroxiredoxin-like PRXL2 family. Prostamide/prostaglandin F synthase subfamily.

It localises to the cytoplasm. It is found in the cytosol. It catalyses the reaction prostaglandin H2 + [thioredoxin]-dithiol = prostaglandin F2alpha + [thioredoxin]-disulfide. It carries out the reaction prostamide F2alpha + [thioredoxin]-disulfide = prostamide H2 + [thioredoxin]-dithiol. Functionally, catalyzes the reduction of prostaglandin-ethanolamide H(2) (prostamide H(2)) to prostamide F(2alpha) with NADPH as proton donor. Also able to reduce prostaglandin H(2) to prostaglandin F(2alpha). This chain is Prostamide/prostaglandin F synthase (PRXL2B), found in Bos taurus (Bovine).